The chain runs to 139 residues: Nucleoside diphosphate kinase (139 aa).

Residues Lys-12, Phe-60, Arg-88, Thr-94, Arg-105, and Asn-115 each contribute to the ATP site. Residue His-118 is the Pros-phosphohistidine intermediate of the active site.

The protein belongs to the NDK family. Homotetramer. Mg(2+) serves as cofactor.

It is found in the cytoplasm. The enzyme catalyses a 2'-deoxyribonucleoside 5'-diphosphate + ATP = a 2'-deoxyribonucleoside 5'-triphosphate + ADP. The catalysed reaction is a ribonucleoside 5'-diphosphate + ATP = a ribonucleoside 5'-triphosphate + ADP. Its function is as follows. Major role in the synthesis of nucleoside triphosphates other than ATP. The ATP gamma phosphate is transferred to the NDP beta phosphate via a ping-pong mechanism, using a phosphorylated active-site intermediate. The polypeptide is Nucleoside diphosphate kinase (Caldanaerobacter subterraneus subsp. tengcongensis (strain DSM 15242 / JCM 11007 / NBRC 100824 / MB4) (Thermoanaerobacter tengcongensis)).